A 128-amino-acid polypeptide reads, in one-letter code: Early 4 ORF1 protein (128 aa).

At 1–26 (MAAAVEALYVVLEREGAILPRQEGFS) the chain is on the cytoplasmic side. Residues 27–47 (GVYVFFSPINFVIPPMGAVML) traverse the membrane as a helical segment. At 48 to 99 (SLRLRVCIPPGYFGRFLALTDVNQPDVFTESYIMTPDMTEELSVVLFNHGDQ) the chain is on the extracellular side. A helical transmembrane segment spans residues 100 to 120 (FFYGHAGMAVVRLMLIRVVFP). Residues 121-128 (VVRQASNV) are Cytoplasmic-facing. The PBZ domain binding motif motif lies at 125 to 128 (ASNV).

It belongs to the adenoviridae E4-ORF1 family. May interact with host PDZ proteins through the PDZ domain binding motif (PBM), namely host DLG1, PATJ and TJP2.

Its subcellular location is the host membrane. May modulate tight-junctions functions of infected cells through interactions with PDZ proteins. E4 ORF1 has ben show for Adenovirus 9 to interact with protein involved in tight junction regulation. May play a role in mTOR activation by activating PI3-kinase, thus overriding cellular checkpoint for translation. The polypeptide is Early 4 ORF1 protein (Human adenovirus C serotype 2 (HAdV-2)).